Here is a 215-residue protein sequence, read N- to C-terminus: Adenylate kinase (215 aa).

10–15 (GAGKGT) is a binding site for ATP. Positions 30 to 59 (STGDILRANVREGTELGLAAKEYMDKGELV) are NMP. Residues Thr-31, Arg-36, 57–59 (ELV), 85–88 (GYPR), and Gln-92 each bind AMP. The LID stretch occupies residues 126–162 (GRLMCNCGASYHRTFNPPKKDDVCDICGGKVFQRADD). Arg-127 provides a ligand contact to ATP. Cys-130 and Cys-132 together coordinate Zn(2+). 135–136 (SY) contributes to the ATP binding site. The Zn(2+) site is built by Cys-149 and Cys-152. AMP contacts are provided by Arg-159 and Arg-170. ATP is bound at residue Lys-198.

The protein belongs to the adenylate kinase family. In terms of assembly, monomer.

Its subcellular location is the cytoplasm. The enzyme catalyses AMP + ATP = 2 ADP. Its pathway is purine metabolism; AMP biosynthesis via salvage pathway; AMP from ADP: step 1/1. In terms of biological role, catalyzes the reversible transfer of the terminal phosphate group between ATP and AMP. Plays an important role in cellular energy homeostasis and in adenine nucleotide metabolism. The sequence is that of Adenylate kinase from Methanosarcina barkeri (strain Fusaro / DSM 804).